We begin with the raw amino-acid sequence, 48 residues long: Large ribosomal subunit protein bL32 (48 aa).

This sequence belongs to the bacterial ribosomal protein bL32 family.

This Helicobacter pylori (strain P12) protein is Large ribosomal subunit protein bL32.